The sequence spans 474 residues: Replication-associated protein (474 aa).

The short motif at 248-255 is the Nuclear localization signal element; sequence GKRFQEDR. Residues 455 to 474 form a disordered region; sequence AFAPGFSLTSEPEPKRRRFF.

It localises to the host nucleus. Its function is as follows. Plays an essential for the replication of viral DNA. Presumably cleaves viral genomic dsRNA replicative form to initiate rolling circle replication. The protein is Replication-associated protein of Avon-Heathcote Estuary associated kieseladnavirus (AHEaBV).